We begin with the raw amino-acid sequence, 660 residues long: Bifunctional polymyxin resistance protein ArnA (660 aa).

The tract at residues 1-304 (MKTVVFAYHD…TLGLVQGSRL (304 aa)) is formyltransferase ArnAFT. 86–88 (HLI) contributes to the (6R)-10-formyltetrahydrofolate binding site. Catalysis depends on His-104, which acts as the Proton donor; for formyltransferase activity. Residues Arg-114 and 136 to 140 (VKRAD) each bind (6R)-10-formyltetrahydrofolate. Residues 314 to 660 (RRTRVLILGV…RTVDLTDKPS (347 aa)) form a dehydrogenase ArnADH region. NAD(+)-binding positions include Asp-347 and 368–369 (DI). Residues Ala-393, Tyr-398, and 432 to 433 (TS) each bind UDP-alpha-D-glucuronate. Glu-434 functions as the Proton acceptor; for decarboxylase activity in the catalytic mechanism. Residues Arg-460, Asn-492, 526–535 (KLIDGGKQKR), and Tyr-613 contribute to the UDP-alpha-D-glucuronate site. The active-site Proton donor; for decarboxylase activity is Arg-619.

In the N-terminal section; belongs to the Fmt family. UDP-L-Ara4N formyltransferase subfamily. This sequence in the C-terminal section; belongs to the NAD(P)-dependent epimerase/dehydratase family. UDP-glucuronic acid decarboxylase subfamily. In terms of assembly, homohexamer, formed by a dimer of trimers.

It carries out the reaction UDP-alpha-D-glucuronate + NAD(+) = UDP-beta-L-threo-pentopyranos-4-ulose + CO2 + NADH. The catalysed reaction is UDP-4-amino-4-deoxy-beta-L-arabinose + (6R)-10-formyltetrahydrofolate = UDP-4-deoxy-4-formamido-beta-L-arabinose + (6S)-5,6,7,8-tetrahydrofolate + H(+). Its pathway is nucleotide-sugar biosynthesis; UDP-4-deoxy-4-formamido-beta-L-arabinose biosynthesis; UDP-4-deoxy-4-formamido-beta-L-arabinose from UDP-alpha-D-glucuronate: step 1/3. The protein operates within nucleotide-sugar biosynthesis; UDP-4-deoxy-4-formamido-beta-L-arabinose biosynthesis; UDP-4-deoxy-4-formamido-beta-L-arabinose from UDP-alpha-D-glucuronate: step 3/3. It functions in the pathway bacterial outer membrane biogenesis; lipopolysaccharide biosynthesis. Its function is as follows. Bifunctional enzyme that catalyzes the oxidative decarboxylation of UDP-glucuronic acid (UDP-GlcUA) to UDP-4-keto-arabinose (UDP-Ara4O) and the addition of a formyl group to UDP-4-amino-4-deoxy-L-arabinose (UDP-L-Ara4N) to form UDP-L-4-formamido-arabinose (UDP-L-Ara4FN). The modified arabinose is attached to lipid A and is required for resistance to polymyxin and cationic antimicrobial peptides. In Escherichia coli O17:K52:H18 (strain UMN026 / ExPEC), this protein is Bifunctional polymyxin resistance protein ArnA.